Here is a 335-residue protein sequence, read N- to C-terminus: Aspartate carbamoyltransferase catalytic subunit (335 aa).

Residues Arg81 and Thr82 each contribute to the carbamoyl phosphate site. Lys109 contacts L-aspartate. Positions 131, 159, and 162 each coordinate carbamoyl phosphate. Arg192 and Arg246 together coordinate L-aspartate. Gly287 and Pro288 together coordinate carbamoyl phosphate.

The protein belongs to the aspartate/ornithine carbamoyltransferase superfamily. ATCase family. In terms of assembly, heterododecamer (2C3:3R2) of six catalytic PyrB chains organized as two trimers (C3), and six regulatory PyrI chains organized as three dimers (R2).

The catalysed reaction is carbamoyl phosphate + L-aspartate = N-carbamoyl-L-aspartate + phosphate + H(+). The protein operates within pyrimidine metabolism; UMP biosynthesis via de novo pathway; (S)-dihydroorotate from bicarbonate: step 2/3. Its function is as follows. Catalyzes the condensation of carbamoyl phosphate and aspartate to form carbamoyl aspartate and inorganic phosphate, the committed step in the de novo pyrimidine nucleotide biosynthesis pathway. The protein is Aspartate carbamoyltransferase catalytic subunit of Caulobacter sp. (strain K31).